Here is a 604-residue protein sequence, read N- to C-terminus: Asparagine synthetase [glutamine-hydrolyzing] 1 (604 aa).

C2 acts as the Nucleophile in catalysis. Residues 2–186 (CGILAVLGAA…PGHLYSSAAG (185 aa)) enclose the Glutamine amidotransferase type-2 domain. Residues 50 to 54 (RLAIV), 75 to 77 (NGE), and D99 each bind L-glutamine. Positions 211–451 (LREAFEKAVI…LPKHILYRQK (241 aa)) constitute an Asparagine synthetase domain. Residues L232, V268, and 342-343 (SG) contribute to the ATP site.

It carries out the reaction L-aspartate + L-glutamine + ATP + H2O = L-asparagine + L-glutamate + AMP + diphosphate + H(+). It functions in the pathway amino-acid biosynthesis; L-asparagine biosynthesis. Its function is as follows. Essential for nitrogen assimilation, distribution and remobilization within the plant via the phloem. This is Asparagine synthetase [glutamine-hydrolyzing] 1 from Oryza sativa subsp. japonica (Rice).